A 322-amino-acid polypeptide reads, in one-letter code: MALMSAVEYPNVAILGCGKLGQALLVGLLRSASGHPGRVKIRELKVTVRSARTAQLVRERISPLLRDRAVPPVWILQQDQNCNVAEQADIVLLGCKHSSLGELVHDLQGMRHDHRRILISLMGGVSPGLIVEALHFWTGPVVRAVCSVAVAVGESITLLSTSDDHTNDAESRRAVTELFASVGVVQWLPECQMHVASAVGASSLAFFAQMIEGLAQGVAEQHSNGANNAQQLPLETALAITAQAARGTAALLQQSTSPADLVAQVATKGGATAAGLRVLEKEKLVQTLRTCAAITAEATAALSQSAGSHGEDNTTDSKTSRA.

2 consecutive transmembrane segments (helical) span residues 9–29 (YPNVAILGCGKLGQALLVGLL) and 117–137 (ILISLMGGVSPGLIVEALHFW). The disordered stretch occupies residues 302–322 (LSQSAGSHGEDNTTDSKTSRA). N-linked (GlcNAc...) asparagine glycosylation occurs at asparagine 313.

It belongs to the pyrroline-5-carboxylate reductase family.

It is found in the membrane. The catalysed reaction is L-proline + NADP(+) = (S)-1-pyrroline-5-carboxylate + NADPH + 2 H(+). It catalyses the reaction L-proline + NAD(+) = (S)-1-pyrroline-5-carboxylate + NADH + 2 H(+). It participates in alkaloid biosynthesis. Its function is as follows. Pyrroline-5-carboxylate reductase; part of the gene cluster that mediates the biosynthesis of paraherquamide, a fungal indole alkaloid that belongs to a family of natural products containing a characteristic bicyclo[2.2.2]diazaoctane core. The first steps in the biosynthesis of paraherquamide is the production of the beta-methyl-proline precursor from L-isoleucine. They require oxidation of a terminally hydroxylated L-isoleucine to the corresponding aldehyde by enzymes which have still to be identified. Spontaneous cyclization and dehydration would yield the 4-methyl pyrolline-5-carboxylic acid, which is then reduced by the pyrroline-5-carboxylate reductase phqD leading to the beta-methyl-proline precursor. The next step of paraherquamide biosynthesis involves coupling of beta-methyl-proline and L-tryptophan by the bimodular NRPS phqB, to produce a monooxopiperazine intermediate. The reductase (R) domain of phqB utilizes NADPH for hydride transfer to reduce the thioester bond of the T domain-tethered linear dipeptide to a hemithioaminal intermediate, which spontaneously cleaves the C-S bond to release the aldehyde product. This compound undergoes spontaneous cyclization and dehydration to give a dienamine which is reverse prenylated at C-2 by the reverse prenyltransferase phqJ. The other prenyltransferase present in the cluster, phqI may be a redundant gene in the pathway. During biosynthetic assembly, the key step to produce the polycyclic core is catalyzed by the bifunctional reductase and intramolecular [4+2] Diels-Alderase, phqE, resulting in formation of the [2.2.2] diazaoctane intermediate preparaherquamide. Following formation of preparaherquamide, an indole 2,3-epoxidation-initiated pinacol-like rearrangement is catalyzed by the phqK FAD-dependent monooxygenase. The prenyltransferase phqA, the cytochrome P450 monooxygenase phqL, and the FAD-linked oxidoreductase phqH (or the cytochrome P450 monooxygenase phqM), are proposed to be involved in the formation of the pyran ring. The FAD-dependent monooxygenase phqK is likely responsible for generation of the spiro-oxindole, and the N-methylation is likely mediated by the phqN methyltransferase leading to the isolable natural product paraherquamide F. However, the order of these biosynthetic steps has still to be determined. In late-stage paraherquamide biosynthesis, the third P450 monooxygenase, phqO, is probably responsible for the C-14 hydroxylation, transforming paraherquamide F to paraherquamide G, and paraherquamide E to the final product paraherquamide A. The expansion from the 6-membered ring pyran (in paraherquamides F and G) to the 7-membered dioxepin ring (in paraherquamides A and E) represents a poorly understood but intriguing process that probably involves the 2-oxoglutarate-dependent dioxygenase phqC. Finally, the remaining members of the paraherquamide cluster, including phqI as well as phqM (or phqH), do not have a clearly prescribed role and appear to be redundant. This Penicillium fellutanum protein is Pyrroline-5-carboxylate reductase.